We begin with the raw amino-acid sequence, 379 residues long: Lipoyl synthase 2, mitochondrial (379 aa).

Residues cysteine 106, cysteine 111, cysteine 117, cysteine 137, cysteine 141, cysteine 144, and serine 352 each coordinate [4Fe-4S] cluster. The Radical SAM core domain maps to 122 to 341; sequence EHGTQTATIM…EERGNELGFL (220 aa).

It belongs to the radical SAM superfamily. Lipoyl synthase family. [4Fe-4S] cluster serves as cofactor.

The protein localises to the mitochondrion. The catalysed reaction is [[Fe-S] cluster scaffold protein carrying a second [4Fe-4S](2+) cluster] + N(6)-octanoyl-L-lysyl-[protein] + 2 oxidized [2Fe-2S]-[ferredoxin] + 2 S-adenosyl-L-methionine + 4 H(+) = [[Fe-S] cluster scaffold protein] + N(6)-[(R)-dihydrolipoyl]-L-lysyl-[protein] + 4 Fe(3+) + 2 hydrogen sulfide + 2 5'-deoxyadenosine + 2 L-methionine + 2 reduced [2Fe-2S]-[ferredoxin]. It participates in protein modification; protein lipoylation via endogenous pathway; protein N(6)-(lipoyl)lysine from octanoyl-[acyl-carrier-protein]: step 2/2. Catalyzes the radical-mediated insertion of two sulfur atoms into the C-6 and C-8 positions of the octanoyl moiety bound to the lipoyl domains of lipoate-dependent enzymes, thereby converting the octanoylated domains into lipoylated derivatives. The chain is Lipoyl synthase 2, mitochondrial from Drosophila yakuba (Fruit fly).